Reading from the N-terminus, the 39-residue chain is Phospholipase A2 (39 aa).

Ca(2+)-binding residues include W10, G12, and G14. Cysteines 11 and 33 form a disulfide. H36 is a catalytic residue. D37 lines the Ca(2+) pocket.

Ca(2+) serves as cofactor. As to expression, expressed uniformly in tentacles (at protein level).

The protein resides in the secreted. The protein localises to the nematocyst. It catalyses the reaction a 1,2-diacyl-sn-glycero-3-phosphocholine + H2O = a 1-acyl-sn-glycero-3-phosphocholine + a fatty acid + H(+). With respect to regulation, inhibited by morin and p-BPB. In terms of biological role, PA2 catalyzes the calcium-dependent hydrolysis of the 2-acyl groups in 3-sn-phosphoglycerides. Induces insulin secretion in isolated rat islets under high glucose concentration conditions, but not under low glucose concentration conditions. Increases perfusion pressure, renal vascular resistance, urinary flow, glomerular filtration rate, and potassium, sodium, and chloride excretion levels in rat kidney. Does not increase perfusion pressure in the rat mesenteric vascular bed. The polypeptide is Phospholipase A2 (Bunodosoma caissarum (Sea anemone)).